The following is a 114-amino-acid chain: Integration host factor subunit alpha (114 aa).

Belongs to the bacterial histone-like protein family. Heterodimer of an alpha and a beta chain.

Its function is as follows. This protein is one of the two subunits of integration host factor, a specific DNA-binding protein that functions in genetic recombination as well as in transcriptional and translational control. The sequence is that of Integration host factor subunit alpha from Afipia carboxidovorans (strain ATCC 49405 / DSM 1227 / KCTC 32145 / OM5) (Oligotropha carboxidovorans).